We begin with the raw amino-acid sequence, 226 residues long: Probable septum site-determining protein MinC (226 aa).

The protein belongs to the MinC family. Interacts with MinD and FtsZ.

Its function is as follows. Cell division inhibitor that blocks the formation of polar Z ring septums. Rapidly oscillates between the poles of the cell to destabilize FtsZ filaments that have formed before they mature into polar Z rings. Prevents FtsZ polymerization. This Bacillus velezensis (strain DSM 23117 / BGSC 10A6 / LMG 26770 / FZB42) (Bacillus amyloliquefaciens subsp. plantarum) protein is Probable septum site-determining protein MinC.